The chain runs to 508 residues: MSRPRILIDGDTLKLEEILQVARNEATVELSPDAATRVRASRALVDRVAAGDTPAYGINTGFGTLAEVRIDKKDLRDLQRNLILSHACGVGTPLPLPEARALLLLRCNVLAKGYSGIRMETLALALDMLNRDVVPVVPERGSVGASGDLAPLAHLALVFIGEGEAFYQGQRMPAKQALERAGLQPVVLEAKEGLALVNGTQAMCAVGTLLQLRAESLADIADVAGAMTLEGLLGSHKPFIPEIHDVRAHPGQKDVAAHLRRILVDSELVESHVNCSKVQDPYSLRCMPQVHGAAREGIAFSRRILEVEVNSATDNPLVFADTERIVSGGNFHGQPISLAMDVVAMALTQLSSISERRVEQLVNPSLSNLPAFLAKNSGLNSGFMIAQVTSAALVAESRVLSHPASVDSIPSSAGREDHVSMGMTAALKGRQVSDFARSCLAIEILVAAQALDFRLPLKPGKGALAAYELVRSKVPHMDKDRELHRDIEAVSQLVDSGELLAAVRSATA.

The segment at residues 145–147 (ASG) is a cross-link (5-imidazolinone (Ala-Gly)). Ser146 carries the 2,3-didehydroalanine (Ser) modification.

The protein belongs to the PAL/histidase family. Post-translationally, contains an active site 4-methylidene-imidazol-5-one (MIO), which is formed autocatalytically by cyclization and dehydration of residues Ala-Ser-Gly.

The protein localises to the cytoplasm. It catalyses the reaction L-histidine = trans-urocanate + NH4(+). It functions in the pathway amino-acid degradation; L-histidine degradation into L-glutamate; N-formimidoyl-L-glutamate from L-histidine: step 1/3. The protein is Histidine ammonia-lyase of Myxococcus xanthus (strain DK1622).